We begin with the raw amino-acid sequence, 60 residues long: Large ribosomal subunit protein bL32 (60 aa).

Belongs to the bacterial ribosomal protein bL32 family.

This chain is Large ribosomal subunit protein bL32, found in Streptococcus suis (strain 05ZYH33).